Here is a 62-residue protein sequence, read N- to C-terminus: Photosystem II reaction center protein Z (62 aa).

Helical transmembrane passes span 8–28 (ALAALVFFSFVMVIGVPFAYA) and 41–61 (WVGSGIWTILVIVVAVLNFFV).

This sequence belongs to the PsbZ family. As to quaternary structure, PSII is composed of 1 copy each of membrane proteins PsbA, PsbB, PsbC, PsbD, PsbE, PsbF, PsbH, PsbI, PsbJ, PsbK, PsbL, PsbM, PsbT, PsbX, PsbY, PsbZ, Psb30/Ycf12, peripheral proteins PsbO, CyanoQ (PsbQ), PsbU, PsbV and a large number of cofactors. It forms dimeric complexes.

The protein localises to the cellular thylakoid membrane. May control the interaction of photosystem II (PSII) cores with the light-harvesting antenna, regulates electron flow through the 2 photosystem reaction centers. PSII is a light-driven water plastoquinone oxidoreductase, using light energy to abstract electrons from H(2)O, generating a proton gradient subsequently used for ATP formation. This Gloeothece citriformis (strain PCC 7424) (Cyanothece sp. (strain PCC 7424)) protein is Photosystem II reaction center protein Z.